A 352-amino-acid polypeptide reads, in one-letter code: Phosphoribosylformylglycinamidine cyclo-ligase (352 aa).

It belongs to the AIR synthase family.

Its subcellular location is the cytoplasm. It catalyses the reaction 2-formamido-N(1)-(5-O-phospho-beta-D-ribosyl)acetamidine + ATP = 5-amino-1-(5-phospho-beta-D-ribosyl)imidazole + ADP + phosphate + H(+). It participates in purine metabolism; IMP biosynthesis via de novo pathway; 5-amino-1-(5-phospho-D-ribosyl)imidazole from N(2)-formyl-N(1)-(5-phospho-D-ribosyl)glycinamide: step 2/2. This is Phosphoribosylformylglycinamidine cyclo-ligase from Teredinibacter turnerae (strain ATCC 39867 / T7901).